A 143-amino-acid chain; its full sequence is Transcriptional regulator MraZ (143 aa).

SpoVT-AbrB domains are found at residues Glu5 to Glu47 and Ala76 to Thr119.

Belongs to the MraZ family. In terms of assembly, forms oligomers.

The protein localises to the cytoplasm. The protein resides in the nucleoid. This is Transcriptional regulator MraZ from Staphylococcus epidermidis (strain ATCC 35984 / DSM 28319 / BCRC 17069 / CCUG 31568 / BM 3577 / RP62A).